The chain runs to 989 residues: SWI/SNF-related matrix-associated actin-dependent regulator of chromatin subfamily A containing DEAD/H box 1 homolog (989 aa).

Residues 1–288 (MSTTSDFQTG…RRAKRGETKN (288 aa)) form a disordered region. The segment covering 72-105 (DDDDEDYVDETMPSEDEEDFDNNEEDEDDDDYEE) has biased composition (acidic residues). Residues 109 to 120 (RKRKAPSKKKLV) show a composition bias toward basic residues. The span at 124–140 (ENYRREDSETPEPEMKR) shows a compositional bias: basic and acidic residues. Positions 187–200 (DDESEDDFINDEEI) are enriched in acidic residues. Basic and acidic residues-rich tracts occupy residues 201-221 (SEKG…GKDS) and 241-250 (AQKEQKKKAE). Residues 251-276 (SDEDWEEDEDDMNADGDETPSDDSDI) show a composition bias toward acidic residues. A compositionally biased stretch (basic and acidic residues) spans 277–288 (EERRAKRGETKN). A Helicase ATP-binding domain is found at 406–574 (IMMYNKDLNA…ISLMYFVLSK (169 aa)). 419 to 426 (DEMGLGKT) contacts ATP. A DEGH box motif is present at residues 525–528 (DEGH). Residues 757-912 (QLDVMLPEIQ…GVKGQLDEDA (156 aa)) form the Helicase C-terminal domain. Residues 941–989 (RYDDVEDDSGDSKNGIDAEEAAKKEDEAVKEPVEKEQQKEEESQPSTSA) are disordered. Basic and acidic residues predominate over residues 950–982 (GDSKNGIDAEEAAKKEDEAVKEPVEKEQQKEEE).

The protein belongs to the SNF2/RAD54 helicase family.

The protein resides in the nucleus. It localises to the chromosome. The enzyme catalyses ATP + H2O = ADP + phosphate + H(+). Functionally, DNA helicase that possesses intrinsic ATP-dependent nucleosome-remodeling activity and is both required for DNA repair and heterochromatin organization. Promotes DNA end resection of double-strand breaks (DSBs) following DNA damage: probably acts by weakening histone DNA interactions in nucleosomes flanking DSBs. In Caenorhabditis elegans, this protein is SWI/SNF-related matrix-associated actin-dependent regulator of chromatin subfamily A containing DEAD/H box 1 homolog.